The chain runs to 186 residues: TATA-box-binding protein (186 aa).

2 repeat units span residues 10 to 86 and 101 to 179.

This sequence belongs to the TBP family.

General factor that plays a role in the activation of archaeal genes transcribed by RNA polymerase. Binds specifically to the TATA box promoter element which lies close to the position of transcription initiation. This chain is TATA-box-binding protein, found in Haloarcula marismortui (strain ATCC 43049 / DSM 3752 / JCM 8966 / VKM B-1809) (Halobacterium marismortui).